The primary structure comprises 312 residues: Olfactory receptor 10P22 (312 aa).

Over 1 to 26 (MGDDNDTDITEFILLGFSGYGFLQGH) the chain is Extracellular. Asn5 carries N-linked (GlcNAc...) asparagine glycosylation. The helical transmembrane segment at 27–47 (LFWGVLCIYVVTLLGNSLIVL) threads the bilayer. Over 48–57 (LTLADSALHS) the chain is Cytoplasmic. Residues 58-78 (PMYFFLRHFSVVEILYTTTIV) form a helical membrane-spanning segment. The Extracellular segment spans residues 79-89 (PRMLADLRSSC). The chain crosses the membrane as a helical span at residues 90–110 (PTIPLASCFTQLYFFALFGIA). Residues 111 to 143 (ECCLLTAMAYDRYAAICCPLHYTTLMSQGTYTG) are Cytoplasmic-facing. A helical membrane pass occupies residues 144-164 (LVGASYLAGVISGTTHSIFIF). Over 165–205 (TLPFRGAKTIHHFLCDILPVLRLATASTFWGEVGNLFVTIT) the chain is Extracellular. Residues 206–226 (FIFVPFLLIVASYACILVTIL) form a helical membrane-spanning segment. Residues 227-236 (GVATSQGRQK) are Cytoplasmic-facing. A helical transmembrane segment spans residues 237-257 (LFSTCSSHLFVVILFFGTATV). The Extracellular portion of the chain corresponds to 258 to 271 (AYMRPQADSFGNTD). A helical transmembrane segment spans residues 272–292 (QILTLVYTVVTPMCNPFVYSL). The Cytoplasmic portion of the chain corresponds to 293–312 (RNKEVTGAMRRLMKRYLWGP).

It belongs to the G-protein coupled receptor 1 family.

It is found in the cell membrane. Odorant receptor. The chain is Olfactory receptor 10P22 from Mus musculus (Mouse).